A 576-amino-acid polypeptide reads, in one-letter code: Proline--tRNA ligase (576 aa).

This sequence belongs to the class-II aminoacyl-tRNA synthetase family. ProS type 1 subfamily. As to quaternary structure, homodimer.

The protein localises to the cytoplasm. The catalysed reaction is tRNA(Pro) + L-proline + ATP = L-prolyl-tRNA(Pro) + AMP + diphosphate. Its function is as follows. Catalyzes the attachment of proline to tRNA(Pro) in a two-step reaction: proline is first activated by ATP to form Pro-AMP and then transferred to the acceptor end of tRNA(Pro). As ProRS can inadvertently accommodate and process non-cognate amino acids such as alanine and cysteine, to avoid such errors it has two additional distinct editing activities against alanine. One activity is designated as 'pretransfer' editing and involves the tRNA(Pro)-independent hydrolysis of activated Ala-AMP. The other activity is designated 'posttransfer' editing and involves deacylation of mischarged Ala-tRNA(Pro). The misacylated Cys-tRNA(Pro) is not edited by ProRS. The protein is Proline--tRNA ligase of Dechloromonas aromatica (strain RCB).